Here is a 291-residue protein sequence, read N- to C-terminus: Elongation factor Ts (291 aa).

The segment at 78–81 (TDFV) is involved in Mg(2+) ion dislocation from EF-Tu.

Belongs to the EF-Ts family.

Its subcellular location is the cytoplasm. Associates with the EF-Tu.GDP complex and induces the exchange of GDP to GTP. It remains bound to the aminoacyl-tRNA.EF-Tu.GTP complex up to the GTP hydrolysis stage on the ribosome. The chain is Elongation factor Ts from Ureaplasma urealyticum serovar 10 (strain ATCC 33699 / Western).